Reading from the N-terminus, the 224-residue chain is uncharacterized protein (224 aa).

Positions 1-21 (MKRTSRSLTAALLGIAALLAG) are cleaved as a signal peptide. Residue cysteine 22 is the site of N-palmitoyl cysteine attachment. Residue cysteine 22 is the site of S-diacylglycerol cysteine attachment.

The protein to M.bovis LprP.

The protein resides in the cell membrane. This is an uncharacterized protein from Mycobacterium tuberculosis (strain ATCC 25618 / H37Rv).